The chain runs to 425 residues: Serine--tRNA ligase (425 aa).

L-serine is bound at residue 233–235 (TAE). Residues 264–266 (RRE) and Val-280 each bind ATP. Glu-287 contacts L-serine. ATP is bound at residue 351 to 354 (EVSS). Position 387 (Ser-387) interacts with L-serine.

It belongs to the class-II aminoacyl-tRNA synthetase family. Type-1 seryl-tRNA synthetase subfamily. Homodimer. The tRNA molecule binds across the dimer.

The protein localises to the cytoplasm. The catalysed reaction is tRNA(Ser) + L-serine + ATP = L-seryl-tRNA(Ser) + AMP + diphosphate + H(+). It catalyses the reaction tRNA(Sec) + L-serine + ATP = L-seryl-tRNA(Sec) + AMP + diphosphate + H(+). Its pathway is aminoacyl-tRNA biosynthesis; selenocysteinyl-tRNA(Sec) biosynthesis; L-seryl-tRNA(Sec) from L-serine and tRNA(Sec): step 1/1. In terms of biological role, catalyzes the attachment of serine to tRNA(Ser). Is also able to aminoacylate tRNA(Sec) with serine, to form the misacylated tRNA L-seryl-tRNA(Sec), which will be further converted into selenocysteinyl-tRNA(Sec). This Gemmatimonas aurantiaca (strain DSM 14586 / JCM 11422 / NBRC 100505 / T-27) protein is Serine--tRNA ligase.